The following is a 286-amino-acid chain: ATP synthase gamma chain (286 aa).

Belongs to the ATPase gamma chain family. F-type ATPases have 2 components, CF(1) - the catalytic core - and CF(0) - the membrane proton channel. CF(1) has five subunits: alpha(3), beta(3), gamma(1), delta(1), epsilon(1). CF(0) has three main subunits: a, b and c.

It is found in the cell inner membrane. Functionally, produces ATP from ADP in the presence of a proton gradient across the membrane. The gamma chain is believed to be important in regulating ATPase activity and the flow of protons through the CF(0) complex. The sequence is that of ATP synthase gamma chain from Shewanella amazonensis (strain ATCC BAA-1098 / SB2B).